Here is a 342-residue protein sequence, read N- to C-terminus: uncharacterized protein (342 aa).

It belongs to the cycloisomerase 2 family.

This is an uncharacterized protein from Staphylococcus aureus (strain MSSA476).